The primary structure comprises 261 residues: uncharacterized protein (261 aa).

The protein belongs to the FrhB family.

This is an uncharacterized protein from Methanocaldococcus jannaschii (strain ATCC 43067 / DSM 2661 / JAL-1 / JCM 10045 / NBRC 100440) (Methanococcus jannaschii).